Reading from the N-terminus, the 487-residue chain is Glutamate--tRNA ligase (487 aa).

Positions 11-21 match the 'HIGH' region motif; it reads PSPTGYPHLGN. Zn(2+)-binding residues include cysteine 108, cysteine 110, cysteine 135, and aspartate 137. The 'KMSKS' region motif lies at 245–249; that stretch reads KLSKR. Position 248 (lysine 248) interacts with ATP.

Belongs to the class-I aminoacyl-tRNA synthetase family. Glutamate--tRNA ligase type 1 subfamily. As to quaternary structure, monomer. Zn(2+) serves as cofactor.

The protein localises to the cytoplasm. The catalysed reaction is tRNA(Glu) + L-glutamate + ATP = L-glutamyl-tRNA(Glu) + AMP + diphosphate. In terms of biological role, catalyzes the attachment of glutamate to tRNA(Glu) in a two-step reaction: glutamate is first activated by ATP to form Glu-AMP and then transferred to the acceptor end of tRNA(Glu). The protein is Glutamate--tRNA ligase of Dehalococcoides mccartyi (strain CBDB1).